A 284-amino-acid chain; its full sequence is MLSKQIPLGIYEKALPAGECWLKRLTLAKELGFDFVEMSVDETDERLSRLDWSREQRLALVSAVAETGVRVPSMCLSAHRRFPLGSEDDAVRTQGLEIMRKAIQFAQDVGIRVIQLAGYDVYYQQANDETRCRFRDGLKESVDMASRAQVTLAMEIMDYPLMNSISKALGYAHYLNNPWFQLYPDIGNLSAWDNDVQMELQAGIGHIVAVHVKDTKPGVFKNVPFGEGVVDFERCFETLKQSGYCGPYLIEMWSETAENPAAEVAKARDWVKARMASAGLVEAA.

This sequence belongs to the L-ribulose-5-phosphate 3-epimerase family.

It carries out the reaction L-ribulose 5-phosphate = L-xylulose 5-phosphate. It functions in the pathway cofactor degradation; L-ascorbate degradation; D-xylulose 5-phosphate from L-ascorbate: step 3/4. Its function is as follows. Catalyzes the isomerization of L-xylulose-5-phosphate to L-ribulose-5-phosphate. Is involved in the anaerobic L-ascorbate utilization. The chain is L-ribulose-5-phosphate 3-epimerase UlaE from Salmonella heidelberg (strain SL476).